A 114-amino-acid chain; its full sequence is uncharacterized protein (114 aa).

This is an uncharacterized protein from Methanocaldococcus jannaschii (strain ATCC 43067 / DSM 2661 / JAL-1 / JCM 10045 / NBRC 100440) (Methanococcus jannaschii).